The primary structure comprises 406 residues: Histone-lysine N-methyltransferase SUV39H2 (406 aa).

The Chromo domain occupies 43-101 (YEVEYLCDYRIEKGVEKFFVKWKGWPESCNTWEPTRNLKCPTLLKQFYSDLYNYFCALK). The region spanning 185-243 (VGCDCSDCFKGKCCPTEAGVLFAYNEHRQIKIPPGRPIYECNSRCKCGPDCPNRVVQKG) is the Pre-SET domain. Residues C187, C189, C192, C197, C198, C225, C229, C231, and C235 each coordinate Zn(2+). The region spanning 246–369 (YSLCIFRTDN…AGEELTFDYQ (124 aa)) is the SET domain. S-adenosyl-L-methionine contacts are provided by residues 257-259 (RGW), Y300, and 326-327 (NH). 4 residues coordinate Zn(2+): C329, C394, C396, and C401. The Post-SET domain occupies 390–406 (VRIACKCGAATCRGYLN).

It belongs to the class V-like SAM-binding methyltransferase superfamily. Histone-lysine methyltransferase family. Suvar3-9 subfamily.

It is found in the nucleus. The protein localises to the chromosome. The protein resides in the centromere. The enzyme catalyses L-lysyl(9)-[histone H3] + 3 S-adenosyl-L-methionine = N(6),N(6),N(6)-trimethyl-L-lysyl(9)-[histone H3] + 3 S-adenosyl-L-homocysteine + 3 H(+). Histone methyltransferase that specifically trimethylates 'Lys-9' of histone H3 using monomethylated H3 'Lys-9' as substrate. H3 'Lys-9' trimethylation represents a specific tag for epigenetic transcriptional repression by recruiting HP1 (CBX1, CBX3 and/or CBX5) proteins to methylated histones. Mainly functions in heterochromatin regions, thereby playing a central role in the establishment of constitutive heterochromatin at pericentric and telomere regions. H3 'Lys-9' trimethylation is also required to direct DNA methylation at pericentric repeats. SUV39H1 is targeted to histone H3 via its interaction with RB1 and is involved in many processes. The sequence is that of Histone-lysine N-methyltransferase SUV39H2 (suv39h2) from Xenopus tropicalis (Western clawed frog).